Here is a 240-residue protein sequence, read N- to C-terminus: Keratinocyte-associated protein 3 (240 aa).

A run of 4 helical transmembrane segments spans residues 21–41 (VGLALILVGHVNLLLGAVLHG), 63–83 (VISVGSGLLSVSLGLVALLAS), 95–115 (LLALALVNLLLSAACSLGLLL), and 163–183 (ALALWIPSVFMSAAEAALSGY).

Belongs to the TMEM54 family.

The protein resides in the membrane. This Bos taurus (Bovine) protein is Keratinocyte-associated protein 3 (KRTCAP3).